Reading from the N-terminus, the 363-residue chain is S-adenosylmethionine:tRNA ribosyltransferase-isomerase (363 aa).

Belongs to the QueA family. As to quaternary structure, monomer.

It is found in the cytoplasm. The enzyme catalyses 7-aminomethyl-7-carbaguanosine(34) in tRNA + S-adenosyl-L-methionine = epoxyqueuosine(34) in tRNA + adenine + L-methionine + 2 H(+). It participates in tRNA modification; tRNA-queuosine biosynthesis. Its function is as follows. Transfers and isomerizes the ribose moiety from AdoMet to the 7-aminomethyl group of 7-deazaguanine (preQ1-tRNA) to give epoxyqueuosine (oQ-tRNA). This chain is S-adenosylmethionine:tRNA ribosyltransferase-isomerase, found in Mannheimia succiniciproducens (strain KCTC 0769BP / MBEL55E).